The following is a 248-amino-acid chain: 1-(5-phosphoribosyl)-5-[(5-phosphoribosylamino)methylideneamino] imidazole-4-carboxamide isomerase (248 aa).

The active-site Proton acceptor is the Asp8. Catalysis depends on Asp129, which acts as the Proton donor.

It belongs to the HisA/HisF family.

It localises to the cytoplasm. The catalysed reaction is 1-(5-phospho-beta-D-ribosyl)-5-[(5-phospho-beta-D-ribosylamino)methylideneamino]imidazole-4-carboxamide = 5-[(5-phospho-1-deoxy-D-ribulos-1-ylimino)methylamino]-1-(5-phospho-beta-D-ribosyl)imidazole-4-carboxamide. Its pathway is amino-acid biosynthesis; L-histidine biosynthesis; L-histidine from 5-phospho-alpha-D-ribose 1-diphosphate: step 4/9. This Rhizobium etli (strain ATCC 51251 / DSM 11541 / JCM 21823 / NBRC 15573 / CFN 42) protein is 1-(5-phosphoribosyl)-5-[(5-phosphoribosylamino)methylideneamino] imidazole-4-carboxamide isomerase.